We begin with the raw amino-acid sequence, 207 residues long: Large ribosomal subunit protein bL25 (207 aa).

Positions 1-20 (MANHQIKAQRRKDEGKGASR) are disordered.

Belongs to the bacterial ribosomal protein bL25 family. CTC subfamily. Part of the 50S ribosomal subunit; part of the 5S rRNA/L5/L18/L25 subcomplex. Contacts the 5S rRNA. Binds to the 5S rRNA independently of L5 and L18.

This is one of the proteins that binds to the 5S RNA in the ribosome where it forms part of the central protuberance. The polypeptide is Large ribosomal subunit protein bL25 (Xylella fastidiosa (strain M12)).